The sequence spans 172 residues: Adenine phosphoribosyltransferase (172 aa).

It belongs to the purine/pyrimidine phosphoribosyltransferase family. In terms of assembly, homodimer.

The protein localises to the cytoplasm. It carries out the reaction AMP + diphosphate = 5-phospho-alpha-D-ribose 1-diphosphate + adenine. It participates in purine metabolism; AMP biosynthesis via salvage pathway; AMP from adenine: step 1/1. Functionally, catalyzes a salvage reaction resulting in the formation of AMP, that is energically less costly than de novo synthesis. This chain is Adenine phosphoribosyltransferase, found in Streptococcus thermophilus (strain ATCC BAA-250 / LMG 18311).